A 203-amino-acid chain; its full sequence is Ribosomal RNA small subunit methyltransferase G (203 aa).

S-adenosyl-L-methionine contacts are provided by residues Gly-75, Leu-80, 126 to 127 (VE), and Arg-141.

It belongs to the methyltransferase superfamily. RNA methyltransferase RsmG family.

The protein localises to the cytoplasm. The enzyme catalyses guanosine(527) in 16S rRNA + S-adenosyl-L-methionine = N(7)-methylguanosine(527) in 16S rRNA + S-adenosyl-L-homocysteine. Functionally, specifically methylates the N7 position of guanine in position 527 of 16S rRNA. This chain is Ribosomal RNA small subunit methyltransferase G, found in Ruthia magnifica subsp. Calyptogena magnifica.